A 171-amino-acid chain; its full sequence is UPF0260 protein Nham_1404 (171 aa).

Belongs to the UPF0260 family.

This Nitrobacter hamburgensis (strain DSM 10229 / NCIMB 13809 / X14) protein is UPF0260 protein Nham_1404.